A 252-amino-acid chain; its full sequence is 3-deoxy-manno-octulosonate cytidylyltransferase (252 aa).

The protein belongs to the KdsB family.

Its subcellular location is the cytoplasm. It catalyses the reaction 3-deoxy-alpha-D-manno-oct-2-ulosonate + CTP = CMP-3-deoxy-beta-D-manno-octulosonate + diphosphate. Its pathway is nucleotide-sugar biosynthesis; CMP-3-deoxy-D-manno-octulosonate biosynthesis; CMP-3-deoxy-D-manno-octulosonate from 3-deoxy-D-manno-octulosonate and CTP: step 1/1. It functions in the pathway bacterial outer membrane biogenesis; lipopolysaccharide biosynthesis. Activates KDO (a required 8-carbon sugar) for incorporation into bacterial lipopolysaccharide in Gram-negative bacteria. This is 3-deoxy-manno-octulosonate cytidylyltransferase from Trichlorobacter lovleyi (strain ATCC BAA-1151 / DSM 17278 / SZ) (Geobacter lovleyi).